Consider the following 451-residue polypeptide: Tubulin alpha-2 chain (451 aa).

Gln11 is a binding site for GTP. Lys40 carries the N6-acetyllysine modification. The GTP site is built by Glu71, Gly144, Thr145, Thr179, Asn206, and Asn228. Glu71 contributes to the Mg(2+) binding site. Glu254 is a catalytic residue.

The protein belongs to the tubulin family. As to quaternary structure, dimer of alpha and beta chains. A typical microtubule is a hollow water-filled tube with an outer diameter of 25 nm and an inner diameter of 15 nM. Alpha-beta heterodimers associate head-to-tail to form protofilaments running lengthwise along the microtubule wall with the beta-tubulin subunit facing the microtubule plus end conferring a structural polarity. Microtubules usually have 13 protofilaments but different protofilament numbers can be found in some organisms and specialized cells. Mg(2+) serves as cofactor. In terms of processing, undergoes a tyrosination/detyrosination cycle, the cyclic removal and re-addition of a C-terminal tyrosine residue by the enzymes tubulin tyrosine carboxypeptidase (TTCP) and tubulin tyrosine ligase (TTL), respectively. Post-translationally, acetylation of alpha chains at Lys-40 stabilizes microtubules and affects affinity and processivity of microtubule motors. This modification has a role in multiple cellular functions, ranging from cell motility, cell cycle progression or cell differentiation to intracellular trafficking and signaling.

It localises to the cytoplasm. The protein resides in the cytoskeleton. The enzyme catalyses GTP + H2O = GDP + phosphate + H(+). Functionally, tubulin is the major constituent of microtubules, a cylinder consisting of laterally associated linear protofilaments composed of alpha- and beta-tubulin heterodimers. Microtubules grow by the addition of GTP-tubulin dimers to the microtubule end, where a stabilizing cap forms. Below the cap, tubulin dimers are in GDP-bound state, owing to GTPase activity of alpha-tubulin. This chain is Tubulin alpha-2 chain (TUBA), found in Oryza sativa subsp. japonica (Rice).